The chain runs to 203 residues: Outer-membrane lipoprotein LolB (203 aa).

Residues 1 to 17 (MNRLFRLLPLASLVLTA) form the signal peptide. The N-palmitoyl cysteine moiety is linked to residue Cys-18. Cys-18 carries S-diacylglycerol cysteine lipidation.

The protein belongs to the LolB family. Monomer.

It localises to the cell outer membrane. Its function is as follows. Plays a critical role in the incorporation of lipoproteins in the outer membrane after they are released by the LolA protein. This Klebsiella pneumoniae subsp. pneumoniae (strain ATCC 700721 / MGH 78578) protein is Outer-membrane lipoprotein LolB.